Reading from the N-terminus, the 343-residue chain is tRNA N6-adenosine threonylcarbamoyltransferase (343 aa).

The Fe cation site is built by His-116 and His-120. Residues 138 to 142 (LVSGG), Asp-172, Gly-185, Asp-189, and Asn-277 contribute to the substrate site. Asp-305 contributes to the Fe cation binding site.

This sequence belongs to the KAE1 / TsaD family. It depends on Fe(2+) as a cofactor.

The protein localises to the cytoplasm. The catalysed reaction is L-threonylcarbamoyladenylate + adenosine(37) in tRNA = N(6)-L-threonylcarbamoyladenosine(37) in tRNA + AMP + H(+). Functionally, required for the formation of a threonylcarbamoyl group on adenosine at position 37 (t(6)A37) in tRNAs that read codons beginning with adenine. Is involved in the transfer of the threonylcarbamoyl moiety of threonylcarbamoyl-AMP (TC-AMP) to the N6 group of A37, together with TsaE and TsaB. TsaD likely plays a direct catalytic role in this reaction. The chain is tRNA N6-adenosine threonylcarbamoyltransferase from Mycobacterium ulcerans (strain Agy99).